The primary structure comprises 95 residues: Integration host factor subunit beta (95 aa).

Belongs to the bacterial histone-like protein family. In terms of assembly, heterodimer of an alpha and a beta chain.

In terms of biological role, this protein is one of the two subunits of integration host factor, a specific DNA-binding protein that functions in genetic recombination as well as in transcriptional and translational control. The polypeptide is Integration host factor subunit beta (Klebsiella pneumoniae (strain 342)).